A 316-amino-acid chain; its full sequence is Ribosomal RNA small subunit methyltransferase H (316 aa).

Residues 35 to 37, Asp-55, Phe-80, Asp-102, and Gln-109 contribute to the S-adenosyl-L-methionine site; that span reads GGH.

This sequence belongs to the methyltransferase superfamily. RsmH family.

Its subcellular location is the cytoplasm. It catalyses the reaction cytidine(1402) in 16S rRNA + S-adenosyl-L-methionine = N(4)-methylcytidine(1402) in 16S rRNA + S-adenosyl-L-homocysteine + H(+). In terms of biological role, specifically methylates the N4 position of cytidine in position 1402 (C1402) of 16S rRNA. This chain is Ribosomal RNA small subunit methyltransferase H, found in Colwellia psychrerythraea (strain 34H / ATCC BAA-681) (Vibrio psychroerythus).